The primary structure comprises 605 residues: Pescadillo homolog (605 aa).

Positions 346-440 (PVATLFSEFV…ELVPANLYLP (95 aa)) constitute a BRCT domain. The interval 449–553 (SPWGDSTGYD…RKATEEEEEK (105 aa)) is disordered. The span at 461–508 (AENDEDVEGSDAEEIDESADEDAESEEVEEDDTAAVALNEDDEDDEDE) shows a compositional bias: acidic residues. Residues 526 to 537 (EAKDVIDSESSD) show a composition bias toward basic and acidic residues. Residues 533–605 (SESSDKKKKK…KAKLAKLDKK (73 aa)) adopt a coiled-coil conformation.

This sequence belongs to the pescadillo family. As to quaternary structure, component of the NOP7 complex, composed of ERB1, NOP7 and YTM1. The complex is held together by ERB1, which interacts with NOP7 via its N-terminal domain and with YTM1 via a high-affinity interaction between the seven-bladed beta-propeller domains of the 2 proteins. The NOP7 complex associates with the 66S pre-ribosome.

The protein localises to the nucleus. The protein resides in the nucleolus. Its subcellular location is the nucleoplasm. Its function is as follows. Component of the NOP7 complex, which is required for maturation of the 25S and 5.8S ribosomal RNAs and formation of the 60S ribosome. The polypeptide is Pescadillo homolog (Kluyveromyces lactis (strain ATCC 8585 / CBS 2359 / DSM 70799 / NBRC 1267 / NRRL Y-1140 / WM37) (Yeast)).